Reading from the N-terminus, the 176-residue chain is NAD(P)H-quinone oxidoreductase subunit 6, chloroplastic (176 aa).

5 helical membrane passes run 10–30, 32–52, 61–81, 92–112, and 152–172; these read ILLV…ILLT, TIYS…FYIL, AQLL…VMFM, IWTV…FSLI, and FILP…GAIA.

This sequence belongs to the complex I subunit 6 family. In terms of assembly, NDH is composed of at least 16 different subunits, 5 of which are encoded in the nucleus.

The protein localises to the plastid. The protein resides in the chloroplast thylakoid membrane. It catalyses the reaction a plastoquinone + NADH + (n+1) H(+)(in) = a plastoquinol + NAD(+) + n H(+)(out). The enzyme catalyses a plastoquinone + NADPH + (n+1) H(+)(in) = a plastoquinol + NADP(+) + n H(+)(out). In terms of biological role, NDH shuttles electrons from NAD(P)H:plastoquinone, via FMN and iron-sulfur (Fe-S) centers, to quinones in the photosynthetic chain and possibly in a chloroplast respiratory chain. The immediate electron acceptor for the enzyme in this species is believed to be plastoquinone. Couples the redox reaction to proton translocation, and thus conserves the redox energy in a proton gradient. The polypeptide is NAD(P)H-quinone oxidoreductase subunit 6, chloroplastic (ndhG) (Piper cenocladum (Ant piper)).